A 459-amino-acid chain; its full sequence is Putative flavin-containing monooxygenase 2 (459 aa).

FAD is bound by residues 17-21, Glu-38, and 46-47; these read GAGVS and VW. 217–220 is an NADP(+) binding site; it reads SAID.

Belongs to the FMO family. It depends on FAD as a cofactor.

This Arabidopsis thaliana (Mouse-ear cress) protein is Putative flavin-containing monooxygenase 2 (FMO2).